The chain runs to 938 residues: Isoleucine--tRNA ligase (938 aa).

The 'HIGH' region motif lies at 58–68; that stretch reads PYANGSIHIGH. N6-acetyllysine is present on Lys183. L-isoleucyl-5'-AMP is bound at residue Glu561. A 'KMSKS' region motif is present at residues 602–606; the sequence is KMSKS. Position 605 (Lys605) interacts with ATP. The Zn(2+) site is built by Cys901, Cys904, Cys921, and Cys924.

This sequence belongs to the class-I aminoacyl-tRNA synthetase family. IleS type 1 subfamily. In terms of assembly, monomer. It depends on Zn(2+) as a cofactor.

It localises to the cytoplasm. The catalysed reaction is tRNA(Ile) + L-isoleucine + ATP = L-isoleucyl-tRNA(Ile) + AMP + diphosphate. Its function is as follows. Catalyzes the attachment of isoleucine to tRNA(Ile). As IleRS can inadvertently accommodate and process structurally similar amino acids such as valine, to avoid such errors it has two additional distinct tRNA(Ile)-dependent editing activities. One activity is designated as 'pretransfer' editing and involves the hydrolysis of activated Val-AMP. The other activity is designated 'posttransfer' editing and involves deacylation of mischarged Val-tRNA(Ile). The polypeptide is Isoleucine--tRNA ligase (Shigella boydii serotype 4 (strain Sb227)).